The chain runs to 1128 residues: Lysylphosphatidylglycerol biosynthesis bifunctional protein LysX (1128 aa).

Positions 1-47 are disordered; the sequence is MDNPPPTGVAPRHLPPGSVHTGKVTASLSHRRPDSVQDAPPAPVPHR. The interval 1–632 is phosphatidylglycerol lysyltransferase; sequence MDNPPPTGVA…GLHADGSPPD (632 aa). The next 6 membrane-spanning stretches (helical) occupy residues 55 to 75, 97 to 117, 121 to 141, 147 to 167, 184 to 204, and 240 to 260; these read VPHI…LWSL, APDT…AIAS, IAWW…GLRF, INAL…IAAW, GVLV…VEVF, and FVNV…VLTL. Residues 619-644 form a disordered region; that stretch reads DTLTGLHADGSPPDWPKPDLLDSGPR. The segment at 633 to 1128 is lysine--tRNA ligase; the sequence is WPKPDLLDSG…TLPFPLVKPR (496 aa). The segment covering 634-644 has biased composition (basic and acidic residues); it reads PKPDLLDSGPR. Residues aspartate 1040 and glutamate 1047 each contribute to the Mg(2+) site.

In the N-terminal section; belongs to the LPG synthetase family. This sequence in the C-terminal section; belongs to the class-II aminoacyl-tRNA synthetase family. Mg(2+) serves as cofactor.

The protein resides in the cell membrane. The catalysed reaction is tRNA(Lys) + L-lysine + ATP = L-lysyl-tRNA(Lys) + AMP + diphosphate. It carries out the reaction L-lysyl-tRNA(Lys) + a 1,2-diacyl-sn-glycero-3-phospho-(1'-sn-glycerol) = a 1,2-diacyl-sn-glycero-3-phospho-1'-(3'-O-L-lysyl)-sn-glycerol + tRNA(Lys). Catalyzes the production of L-lysyl-tRNA(Lys)transfer and the transfer of a lysyl group from L-lysyl-tRNA(Lys) to membrane-bound phosphatidylglycerol (PG), which produces lysylphosphatidylglycerol (LPG), one of the components of the bacterial membrane with a positive net charge. LPG synthesis contributes to the resistance to cationic antimicrobial peptides (CAMPs) and likely protects M.tuberculosis against the CAMPs produced by competiting microorganisms (bacteriocins). In fact, the modification of anionic phosphatidylglycerol with positively charged L-lysine results in repulsion of the peptides. This is Lysylphosphatidylglycerol biosynthesis bifunctional protein LysX (lysX) from Nocardia farcinica (strain IFM 10152).